The primary structure comprises 80 residues: Exodeoxyribonuclease 7 small subunit (80 aa).

Belongs to the XseB family. In terms of assembly, heterooligomer composed of large and small subunits.

Its subcellular location is the cytoplasm. It catalyses the reaction Exonucleolytic cleavage in either 5'- to 3'- or 3'- to 5'-direction to yield nucleoside 5'-phosphates.. Functionally, bidirectionally degrades single-stranded DNA into large acid-insoluble oligonucleotides, which are then degraded further into small acid-soluble oligonucleotides. The chain is Exodeoxyribonuclease 7 small subunit from Rickettsia canadensis (strain McKiel).